A 421-amino-acid chain; its full sequence is Voltage-dependent calcium channel gamma-8 subunit (421 aa).

Helical transmembrane passes span 19-39, 127-147, 157-177, and 207-227; these read VQVLLTTIGAFAAFGLMTIAI, SSIFPILSAILLLLGGVCVAA, IILGAGILFVAAGLSNIIGVI, and FGGLSFILAEVIGVLAVNIYI. Residues S251 and S254 each carry the phosphoserine modification. The interval 271 to 304 is disordered; the sequence is RRSRSSSRGSSEASPSRDASPGGPGGPGFASTDI. Low complexity predominate over residues 276 to 287; it reads SSRGSSEASPSR. Residues 318–338 traverse the membrane as a helical segment; sequence VAAGLASAGGGGGGAGVGAYG. 2 disordered regions span residues 342–363 and 378–421; these read GAAGGGGTGSERDRGSSAGFLT and VTVT…TTPV. The segment covering 384–397 has biased composition (pro residues); sequence PAAPAPAPPAPAAP. The segment covering 408–421 has biased composition (polar residues); the sequence is ASNTNTLNRKTTPV.

This sequence belongs to the PMP-22/EMP/MP20 family. CACNG subfamily. As to quaternary structure, interacts with CACNA1C. Identified in a complex with the L-type calcium channel subunits CACNA1C, CACNA2D1 and either CACNB1 or CACNB2. Acts as an auxiliary subunit for AMPA-selective glutamate receptors (AMPARs). Found in a complex with GRIA1, GRIA2, GRIA3, GRIA4, CNIH2, CNIH3, CACNG2, CACNG3, CACNG4, CACNG5 and CACNG7. Interacts with CNIH2. Found in a complex with GRIA1, GRIA2, GRIA3, GRIA4, DLG4 and CNIH2. In terms of processing, palmitoylated. Probably palmitoylated by ZDHHC3 and ZDHHC7.

Its subcellular location is the cell membrane. The protein localises to the postsynaptic density membrane. Functionally, regulates the activity of L-type calcium channels that contain CACNA1C as pore-forming subunit. Regulates the trafficking and gating properties of AMPA-selective glutamate receptors (AMPARs). Promotes their targeting to the cell membrane and synapses and modulates their gating properties by slowing their rates of activation, deactivation and desensitization and by mediating their resensitization. Does not show subunit-specific AMPA receptor regulation and regulates all AMPAR subunits. Thought to stabilize the calcium channel in an inactivated (closed) state. The protein is Voltage-dependent calcium channel gamma-8 subunit of Rattus norvegicus (Rat).